Here is a 130-residue protein sequence, read N- to C-terminus: Small ribosomal subunit protein uS9 (130 aa).

The protein belongs to the universal ribosomal protein uS9 family.

This is Small ribosomal subunit protein uS9 from Streptococcus mutans serotype c (strain ATCC 700610 / UA159).